The following is a 635-amino-acid chain: Probable clathrin assembly protein At4g32285 (635 aa).

An ENTH domain is found at 23–159; sequence VASNMAPDLE…ELALFERRGR (137 aa). A disordered region spans residues 157–208; sequence RGRNGGGSSSSHQSNGDDGYNRSRDDFRSPPPRTYDYETGNGFGMPKRSRSF. The segment covering 165–174 has biased composition (low complexity); the sequence is SSSHQSNGDD. The segment covering 175–184 has biased composition (basic and acidic residues); that stretch reads GYNRSRDDFR. S207 carries the phosphoserine modification. Phosphothreonine is present on T224. The span at 357-369 shows a compositional bias: basic and acidic residues; sequence AKRAKSPERKEIE. Residues 357 to 412 form a disordered region; that stretch reads AKRAKSPERKEIEAPPAPAPPVEEPVDMNEIKALPPPENHTPPPPPAPEPKPQQPQ. Pro residues predominate over residues 390–409; sequence LPPPENHTPPPPPAPEPKPQ.

It is found in the membrane. It localises to the clathrin-coated pit. The protein localises to the golgi apparatus. The protein resides in the cytoplasmic vesicle. Its subcellular location is the clathrin-coated vesicle. The sequence is that of Probable clathrin assembly protein At4g32285 from Arabidopsis thaliana (Mouse-ear cress).